A 273-amino-acid polypeptide reads, in one-letter code: Dermonecrotic toxin LdSicTox-alphaIB3avi (273 aa).

His-5 is a catalytic residue. Positions 25 and 27 each coordinate Mg(2+). Residue His-41 is the Nucleophile of the active site. 2 disulfides stabilise this stretch: Cys-45–Cys-51 and Cys-47–Cys-190. Asp-85 serves as a coordination point for Mg(2+).

This sequence belongs to the arthropod phospholipase D family. Class II subfamily. Requires Mg(2+) as cofactor. Expressed by the venom gland.

It localises to the secreted. The enzyme catalyses an N-(acyl)-sphingosylphosphocholine = an N-(acyl)-sphingosyl-1,3-cyclic phosphate + choline. It catalyses the reaction an N-(acyl)-sphingosylphosphoethanolamine = an N-(acyl)-sphingosyl-1,3-cyclic phosphate + ethanolamine. The catalysed reaction is a 1-acyl-sn-glycero-3-phosphocholine = a 1-acyl-sn-glycero-2,3-cyclic phosphate + choline. It carries out the reaction a 1-acyl-sn-glycero-3-phosphoethanolamine = a 1-acyl-sn-glycero-2,3-cyclic phosphate + ethanolamine. In terms of biological role, dermonecrotic toxins cleave the phosphodiester linkage between the phosphate and headgroup of certain phospholipids (sphingolipid and lysolipid substrates), forming an alcohol (often choline) and a cyclic phosphate. This toxin acts on sphingomyelin (SM). It may also act on ceramide phosphoethanolamine (CPE), lysophosphatidylcholine (LPC) and lysophosphatidylethanolamine (LPE), but not on lysophosphatidylserine (LPS), and lysophosphatidylglycerol (LPG). It acts by transphosphatidylation, releasing exclusively cyclic phosphate products as second products. Induces dermonecrosis, hemolysis, increased vascular permeability, edema, inflammatory response, and platelet aggregation. The chain is Dermonecrotic toxin LdSicTox-alphaIB3avi from Loxosceles deserta (Desert recluse spider).